We begin with the raw amino-acid sequence, 299 residues long: uncharacterized protein (299 aa).

8 helical membrane-spanning segments follow: residues 13-33, 36-56, 79-99, 112-132, 151-171, 201-221, 241-261, and 267-287; these read ILFL…LHFM, AFVI…FLML, SFGI…VIII, TAIG…ISVI, ITSE…LFFI, FLIL…VILV, YVIL…MLLS, and PPGP…FLII.

It belongs to the ABC-3 integral membrane protein family.

Its subcellular location is the plastid. The protein resides in the cyanelle membrane. This is an uncharacterized protein from Cyanophora paradoxa.